The sequence spans 415 residues: Transcription termination factor Rho (415 aa).

A Rho RNA-BD domain is found at 52–119 (ADIASGVLDI…TDVVRVNGRT (68 aa)). Residues 161–166 (GKGQRG), 173–178 (KTGKTV), and Arg204 each bind ATP.

This sequence belongs to the Rho family. As to quaternary structure, homohexamer. The homohexamer assembles into an open ring structure.

Functionally, facilitates transcription termination by a mechanism that involves Rho binding to the nascent RNA, activation of Rho's RNA-dependent ATPase activity, and release of the mRNA from the DNA template. In Streptomyces coelicolor (strain ATCC BAA-471 / A3(2) / M145), this protein is Transcription termination factor Rho.